Consider the following 424-residue polypeptide: Tyrosine--tRNA ligase (424 aa).

Tyr37 is an L-tyrosine binding site. Positions Pro42–His51 match the 'HIGH' region motif. Lys144 is modified (N6-acetyllysine). 2 residues coordinate L-tyrosine: Tyr175 and Gln179. The 'KMSKS' region signature appears at Lys235–Thr239. Lys238 is an ATP binding site. One can recognise an S4 RNA-binding domain in the interval Ala357–Gly414.

This sequence belongs to the class-I aminoacyl-tRNA synthetase family. TyrS type 1 subfamily. In terms of assembly, homodimer.

Its subcellular location is the cytoplasm. The catalysed reaction is tRNA(Tyr) + L-tyrosine + ATP = L-tyrosyl-tRNA(Tyr) + AMP + diphosphate + H(+). Catalyzes the attachment of tyrosine to tRNA(Tyr) in a two-step reaction: tyrosine is first activated by ATP to form Tyr-AMP and then transferred to the acceptor end of tRNA(Tyr). In Escherichia coli O8 (strain IAI1), this protein is Tyrosine--tRNA ligase.